A 397-amino-acid polypeptide reads, in one-letter code: Putative nickel insertion protein (397 aa).

The protein belongs to the LarC family.

This chain is Putative nickel insertion protein, found in Synechococcus sp. (strain JA-3-3Ab) (Cyanobacteria bacterium Yellowstone A-Prime).